The chain runs to 239 residues: Serine protease SplC (239 aa).

Residues 1 to 36 (MNKNIVIKSMAALAILTSVTGINAAVVEETQQIANA) form the signal peptide. Active-site charge relay system residues include histidine 75, aspartate 113, and serine 193.

It belongs to the peptidase S1B family.

The protein localises to the secreted. This chain is Serine protease SplC (splC), found in Staphylococcus aureus.